A 197-amino-acid polypeptide reads, in one-letter code: Small ribosomal subunit protein uS4c (197 aa).

One can recognise an S4 RNA-binding domain in the interval M84 to L143.

It belongs to the universal ribosomal protein uS4 family. As to quaternary structure, part of the 30S ribosomal subunit. Contacts protein S5. The interaction surface between S4 and S5 is involved in control of translational fidelity.

It is found in the plastid. The protein localises to the chloroplast. Functionally, one of the primary rRNA binding proteins, it binds directly to 16S rRNA where it nucleates assembly of the body of the 30S subunit. Its function is as follows. With S5 and S12 plays an important role in translational accuracy. This chain is Small ribosomal subunit protein uS4c (rps4), found in Adiantum capillus-veneris (Maidenhair fern).